A 436-amino-acid polypeptide reads, in one-letter code: Xylose isomerase (436 aa).

Catalysis depends on residues H100 and D103. Mg(2+)-binding residues include E231, E267, H270, D295, D306, D308, and D338.

Belongs to the xylose isomerase family. Homotetramer. It depends on Mg(2+) as a cofactor.

It localises to the cytoplasm. It catalyses the reaction alpha-D-xylose = alpha-D-xylulofuranose. This chain is Xylose isomerase, found in Rhizobium johnstonii (strain DSM 114642 / LMG 32736 / 3841) (Rhizobium leguminosarum bv. viciae).